We begin with the raw amino-acid sequence, 1147 residues long: Nucleolar protein 6 (1147 aa).

The interval 1–49 (MQKKRSRAGAAEQEAASDDGEMSDSSDKMEVSQNKGKSGIKRAPEADDV) is disordered. Acidic residues predominate over residues 15–24 (AASDDGEMSD).

This sequence belongs to the NRAP family. As to quaternary structure, part of the small subunit (SSU) processome, composed of more than 70 proteins and the RNA chaperone small nucleolar RNA (snoRNA) U3.

It is found in the nucleus. It localises to the nucleolus. The protein localises to the chromosome. Functionally, part of the small subunit (SSU) processome, first precursor of the small eukaryotic ribosomal subunit. During the assembly of the SSU processome in the nucleolus, many ribosome biogenesis factors, an RNA chaperone and ribosomal proteins associate with the nascent pre-rRNA and work in concert to generate RNA folding, modifications, rearrangements and cleavage as well as targeted degradation of pre-ribosomal RNA by the RNA exosome. The sequence is that of Nucleolar protein 6 (nol6) from Xenopus laevis (African clawed frog).